The chain runs to 859 residues: DNA mismatch repair protein MutS (859 aa).

618–625 (GPNMGGKS) serves as a coordination point for ATP.

It belongs to the DNA mismatch repair MutS family.

In terms of biological role, this protein is involved in the repair of mismatches in DNA. It is possible that it carries out the mismatch recognition step. This protein has a weak ATPase activity. The protein is DNA mismatch repair protein MutS of Shewanella sediminis (strain HAW-EB3).